The primary structure comprises 133 residues: Large-conductance mechanosensitive channel (133 aa).

3 helical membrane passes run 8–28 (FAMKGNVVDLAVGVIIGGAFG), 30–50 (IVTSLVNDVIMPILGLILGGI), and 73–93 (GQFIQNILDFLIISFSIFLFI).

The protein belongs to the MscL family. As to quaternary structure, homopentamer.

It localises to the cell membrane. Its function is as follows. Channel that opens in response to stretch forces in the membrane lipid bilayer. May participate in the regulation of osmotic pressure changes within the cell. The chain is Large-conductance mechanosensitive channel from Hathewaya histolytica (Clostridium histolyticum).